A 393-amino-acid chain; its full sequence is Phosphopentomutase (393 aa).

6 residues coordinate Mn(2+): D14, D287, H292, D328, H329, and H340.

The protein belongs to the phosphopentomutase family. Mn(2+) serves as cofactor.

It localises to the cytoplasm. The enzyme catalyses 2-deoxy-alpha-D-ribose 1-phosphate = 2-deoxy-D-ribose 5-phosphate. It carries out the reaction alpha-D-ribose 1-phosphate = D-ribose 5-phosphate. It functions in the pathway carbohydrate degradation; 2-deoxy-D-ribose 1-phosphate degradation; D-glyceraldehyde 3-phosphate and acetaldehyde from 2-deoxy-alpha-D-ribose 1-phosphate: step 1/2. Functionally, isomerase that catalyzes the conversion of deoxy-ribose 1-phosphate (dRib-1-P) and ribose 1-phosphate (Rib-1-P) to deoxy-ribose 5-phosphate (dRib-5-P) and ribose 5-phosphate (Rib-5-P), respectively. This is Phosphopentomutase from Geobacillus stearothermophilus (Bacillus stearothermophilus).